A 412-amino-acid chain; its full sequence is CCA-adding enzyme (412 aa).

2 residues coordinate ATP: Ser-41 and Lys-44. 2 residues coordinate CTP: Ser-41 and Lys-44. 3 residues coordinate Mg(2+): Asp-53, Asp-55, and Asp-106. ATP-binding residues include His-129, Lys-149, and Tyr-158. Residues His-129, Lys-149, and Tyr-158 each coordinate CTP.

The protein belongs to the tRNA nucleotidyltransferase/poly(A) polymerase family. Archaeal CCA-adding enzyme subfamily. In terms of assembly, homodimer. Requires Mg(2+) as cofactor.

It carries out the reaction a tRNA precursor + 2 CTP + ATP = a tRNA with a 3' CCA end + 3 diphosphate. It catalyses the reaction a tRNA with a 3' CCA end + 2 CTP + ATP = a tRNA with a 3' CCACCA end + 3 diphosphate. In terms of biological role, catalyzes the addition and repair of the essential 3'-terminal CCA sequence in tRNAs without using a nucleic acid template. Adds these three nucleotides in the order of C, C, and A to the tRNA nucleotide-73, using CTP and ATP as substrates and producing inorganic pyrophosphate. tRNA 3'-terminal CCA addition is required both for tRNA processing and repair. Also involved in tRNA surveillance by mediating tandem CCA addition to generate a CCACCA at the 3' terminus of unstable tRNAs. While stable tRNAs receive only 3'-terminal CCA, unstable tRNAs are marked with CCACCA and rapidly degraded. The chain is CCA-adding enzyme from Saccharolobus islandicus (strain Y.N.15.51 / Yellowstone #2) (Sulfolobus islandicus).